The following is a 207-amino-acid chain: Ras-related protein Rab-8A (207 aa).

GTP-binding residues include serine 17, glycine 18, valine 19, glycine 20, lysine 21, threonine 22, cysteine 23, serine 35, serine 39, and threonine 40. Residue threonine 22 participates in Mg(2+) binding. Short sequence motifs (switch) lie at residues 31–45 and 63–80; these read DAFN…GIDF and DTAG…YYRG. The Mg(2+) site is built by threonine 40 and aspartate 63. Position 66 (glycine 66) interacts with GTP. The residue at position 72 (threonine 72) is a Phosphothreonine; by LRRK2. GTP contacts are provided by asparagine 121, lysine 122, aspartate 124, alanine 152, and lysine 153. Serine 181 and serine 185 each carry phosphoserine. Cysteine 204 carries the cysteine methyl ester modification. Cysteine 204 is lipidated: S-geranylgeranyl cysteine. Positions 205–207 are cleaved as a propeptide — removed in mature form; sequence SLL.

The protein belongs to the small GTPase superfamily. Rab family. As to quaternary structure, interacts (GTP-bound form) with MICALL1; regulates RAB8A association with recycling endosomes. Interacts with MICALL2; competes with RAB13 and is involved in E-cadherin endocytic recycling. Interacts (GTP-bound form) with MICAL1, MICALCL, MICAL3 and EHBP1L1; two molecules of RAB8A can bind to one molecule of the effector protein; ternary complexes of RAB8A, RAB13 and either MICAL1 or EHBP1L1 are possible. Interacts (GTP-bound form) with EHBP1. Interacts with EHD1. Interacts with MAP4K2 and SYTL4. Interacts with SGSM1 and SGSM3. Interacts with RABIF, RIMS2, RPH3A and RPH3A. Interacts with OPTN. Interacts with MYO5B. Interacts with CIMAP3. Interacts with BIRC6/bruce. Interacts with OCRL. Interacts with AHI1. Interacts with DCDC1. Interacts with LRRK2; interaction facilitates phosphorylation of Thr-72. Interacts with RAB31P, GDI1, GDI2, CHM, CHML, RABGGTA, RABGGTB, TBC1D15 and INPP5B; these interactions are dependent on Thr-72 not being phosphorylated. Interacts with RILPL1 and RILPL2; these interactions are dependent on the phosphorylation of Thr-72 by LRRK2. Interacts with DZIP1; prevents inhibition by the GDP-dissociation inhibitor GDI2. Interacts with RAB3IP/Rabin8, RAB3IP functions as guanine exchange factor (GEF) towards RAB8A. Interacts (in GDP-bound form) with RPGR, RPGR functions as GEF towards RAB8A. Requires Mg(2+) as cofactor. Post-translationally, phosphorylation of Thr-72 in the switch II region by LRRK2 prevents the association of RAB regulatory proteins, including CHM, CHML and RAB GDP dissociation inhibitors GDI1 and GDI2. Phosphorylation by LRRK2 is required for localization to stressed lysosomes.

The protein resides in the cell membrane. Its subcellular location is the golgi apparatus. It localises to the endosome membrane. The protein localises to the recycling endosome membrane. It is found in the cell projection. The protein resides in the cilium. Its subcellular location is the cytoplasmic vesicle. It localises to the phagosome membrane. The protein localises to the cytoplasm. It is found in the cytoskeleton. The protein resides in the microtubule organizing center. Its subcellular location is the centrosome. It localises to the centriole. The protein localises to the cilium basal body. It is found in the midbody. The protein resides in the lysosome. The catalysed reaction is GTP + H2O = GDP + phosphate + H(+). With respect to regulation, regulated by guanine nucleotide exchange factors (GEFs) such as RAB3IP/Rabin8 and RPGR which promote the exchange of bound GDP for free GTP, GTPase activating proteins (GAPs) which increase the GTP hydrolysis activity, and GDP dissociation inhibitors (GDIs) which inhibit the dissociation of the nucleotide from the GTPase. Activated in response to insulin. In terms of biological role, the small GTPases Rab are key regulators of intracellular membrane trafficking, from the formation of transport vesicles to their fusion with membranes. Rabs cycle between an inactive GDP-bound form and an active GTP-bound form that is able to recruit to membranes different sets of downstream effectors directly responsible for vesicle formation, movement, tethering and fusion. RAB8A is involved in polarized vesicular trafficking and neurotransmitter release. Together with RAB11A, RAB3IP, the exocyst complex, PARD3, PRKCI, ANXA2, CDC42 and DNMBP promotes transcytosis of PODXL to the apical membrane initiation sites (AMIS), apical surface formation and lumenogenesis. Regulates the compacted morphology of the Golgi. Together with MYO5B and RAB11A participates in epithelial cell polarization. Also involved in membrane trafficking to the cilium and ciliogenesis. Together with MICALL2, may also regulate adherens junction assembly. May play a role in insulin-induced transport to the plasma membrane of the glucose transporter GLUT4 and therefore play a role in glucose homeostasis. Involved in autophagy. Participates in the export of a subset of neosynthesized proteins through a Rab8-Rab10-Rab11-dependent endososomal export route. Targeted to and stabilized on stressed lysosomes through LRRK2 phosphorylation. Suppresses stress-induced lysosomal enlargement through EHBP1 and EHNP1L1 effector proteins. This chain is Ras-related protein Rab-8A, found in Mus musculus (Mouse).